The sequence spans 565 residues: Periplasmic trehalase (565 aa).

Residues 1–30 (MKSPAPSRPQKMALIPACIFLCFAALSVQA) form the signal peptide. Substrate-binding positions include Arg-152, 159-160 (WD), Asn-196, 205-207 (RSQ), 277-279 (RPE), and Gly-310. Catalysis depends on proton donor/acceptor residues Asp-312 and Glu-496. Residue Glu-511 participates in substrate binding. The interval 539–565 (CDNVPATRPLSESTTQPVKPKEAEPTL) is disordered.

Belongs to the glycosyl hydrolase 37 family. As to quaternary structure, monomer.

The protein resides in the periplasm. The catalysed reaction is alpha,alpha-trehalose + H2O = alpha-D-glucose + beta-D-glucose. Provides the cells with the ability to utilize trehalose at high osmolarity by splitting it into glucose molecules that can subsequently be taken up by the phosphotransferase-mediated uptake system. This chain is Periplasmic trehalase, found in Shigella dysenteriae serotype 1 (strain Sd197).